Consider the following 131-residue polypeptide: Peptide methionine sulfoxide reductase MsrB (131 aa).

The region spanning 8 to 130 (LDTWREELTD…NSLSLKLVPR (123 aa)) is the MsrB domain. 4 residues coordinate Zn(2+): Cys47, Cys50, Cys96, and Cys99. The active-site Nucleophile is Cys119.

It belongs to the MsrB Met sulfoxide reductase family. It depends on Zn(2+) as a cofactor.

It carries out the reaction L-methionyl-[protein] + [thioredoxin]-disulfide + H2O = L-methionyl-(R)-S-oxide-[protein] + [thioredoxin]-dithiol. The chain is Peptide methionine sulfoxide reductase MsrB from Ectopseudomonas mendocina (strain ymp) (Pseudomonas mendocina).